A 1770-amino-acid chain; its full sequence is Vitellogenin (1770 aa).

Residues 1–16 (MLLLLTLLLFAGTVAA) form the signal peptide. Positions 22-809 (WQVGNEYTYL…SEDSVIPRIL (788 aa)) constitute a Vitellogenin domain. A disulfide bridge links Cys-178 with Cys-222. Asn-296 is a glycosylation site (N-linked (GlcNAc...) asparagine). A disordered region spans residues 373–394 (SSSSSISSSEENDFWQPKPTLE). N-linked (GlcNAc...) asparagine glycosylation is present at Asn-1067. Positions 1442 to 1635 (TSCMLDKTRA…SYALISNQCE (194 aa)) constitute a VWFD domain. 2 cysteine pairs are disulfide-bonded: Cys-1444/Cys-1598 and Cys-1466/Cys-1634.

As to expression, accumulates in the hemolymph. Represents up to 70% of the queen's hemolymph proteins. During the first week of the worker adult life, when it becomes a nurse bee and performs brood-rearing tasks, the vitellogenin titer increases and may account for up to 40% of the total hemolymph proteins.

It localises to the secreted. In terms of biological role, precursor of the egg-yolk proteins that are sources of nutrients during embryonic development. Involved in the differentiation of honeybee larvae into queens. This Apis mellifera (Honeybee) protein is Vitellogenin (Vg).